The sequence spans 242 residues: Ribonuclease 3 2 (242 aa).

The RNase III domain maps to 12–137 (LESLVRKLGL…VLGALYLSTS (126 aa)). Residue E51 coordinates Mg(2+). Residue D55 is part of the active site. Positions 123 and 126 each coordinate Mg(2+). E126 is a catalytic residue. The DRBM domain maps to 165 to 235 (NYKAALQEWT…AKVAFLAITP (71 aa)).

The protein belongs to the ribonuclease III family. Homodimer. Requires Mg(2+) as cofactor.

The protein resides in the cytoplasm. The catalysed reaction is Endonucleolytic cleavage to 5'-phosphomonoester.. Its function is as follows. Digests double-stranded RNA. Involved in the processing of primary rRNA transcript to yield the immediate precursors to the large and small rRNAs (23S and 16S). Processes some mRNAs, and tRNAs when they are encoded in the rRNA operon. Processes pre-crRNA and tracrRNA of type II CRISPR loci if present in the organism. The chain is Ribonuclease 3 2 (rnc2) from Nostoc sp. (strain PCC 7120 / SAG 25.82 / UTEX 2576).